The following is a 150-amino-acid chain: Avidin-related protein 1 (150 aa).

Positions 1 to 24 are cleaved as a signal peptide; the sequence is MVHATSPLLLLLLLSLALVAPGLS. Positions 26–147 constitute an Avidin-like domain; it reads RKCSLTGKWD…GNNDFTRQRT (122 aa). C28 and C105 are joined by a disulfide. N36 and S40 together coordinate biotin. A glycan (N-linked (GlcNAc...) asparagine) is linked at N54. The biotin site is built by Y57, T59, and D63. 2 N-linked (GlcNAc...) asparagine glycosylation sites follow: N67 and N93. Positions 95, 99, and 140 each coordinate biotin.

Belongs to the avidin/streptavidin family. As to quaternary structure, homotetramer. Post-translationally, glycosylated.

It localises to the secreted. Functionally, forms a strong non-covalent specific complex with biotin. The protein is Avidin-related protein 1 (AVR1) of Gallus gallus (Chicken).